A 576-amino-acid polypeptide reads, in one-letter code: Type II restriction enzyme BsuRI (576 aa).

Monomer. Mg(2+) is required as a cofactor.

It catalyses the reaction Endonucleolytic cleavage of DNA to give specific double-stranded fragments with terminal 5'-phosphates.. In terms of biological role, a P subtype restriction enzyme that recognizes the double-stranded sequence 5'-GGCC-3' and cleaves after G-2. In Bacillus subtilis, this protein is Type II restriction enzyme BsuRI (hsdRR).